The chain runs to 1465 residues: DNA polymerase III PolC-type (1465 aa).

The Exonuclease domain occupies 431–583 (DVETTGLSAM…YDAEATGRLL (153 aa)).

This sequence belongs to the DNA polymerase type-C family. PolC subfamily.

The protein localises to the cytoplasm. The enzyme catalyses DNA(n) + a 2'-deoxyribonucleoside 5'-triphosphate = DNA(n+1) + diphosphate. Its function is as follows. Required for replicative DNA synthesis. This DNA polymerase also exhibits 3' to 5' exonuclease activity. The sequence is that of DNA polymerase III PolC-type from Streptococcus pyogenes.